The chain runs to 147 residues: Ribosomal RNA large subunit methyltransferase H (147 aa).

S-adenosyl-L-methionine is bound by residues Leu64, Gly96, and 115-120; that span reads FSKMTF.

Belongs to the RNA methyltransferase RlmH family. In terms of assembly, homodimer.

It localises to the cytoplasm. The catalysed reaction is pseudouridine(1915) in 23S rRNA + S-adenosyl-L-methionine = N(3)-methylpseudouridine(1915) in 23S rRNA + S-adenosyl-L-homocysteine + H(+). Functionally, specifically methylates the pseudouridine at position 1915 (m3Psi1915) in 23S rRNA. The chain is Ribosomal RNA large subunit methyltransferase H from Acholeplasma laidlawii (strain PG-8A).